Consider the following 148-residue polypeptide: UPF0178 protein LPC_0108 (148 aa).

The protein belongs to the UPF0178 family.

In Legionella pneumophila (strain Corby), this protein is UPF0178 protein LPC_0108.